The primary structure comprises 59 residues: Dybowskin-1CDYa (59 aa).

Residues 1–22 form the signal peptide; the sequence is MFTLKKSLLLLFFLGTINFSLC. The propeptide occupies 23–44; sequence EEERNAEEERRDYPEERDVEVE.

It belongs to the frog skin active peptide (FSAP) family. Brevinin subfamily. Expressed by the skin glands.

The protein localises to the secreted. Antimicrobial peptide. Has activity against the Gram-positive bacterium S.aureus (MIC=6 uM) and the Gram-negative bacterium E.coli (MIC=3 uM). Lacks hemolytic activity against human erythrocytes. The polypeptide is Dybowskin-1CDYa (Rana dybowskii (Dybovsky's frog)).